Consider the following 269-residue polypeptide: Phosphatidylglycerol--prolipoprotein diacylglyceryl transferase (269 aa).

The next 4 membrane-spanning stretches (helical) occupy residues 14 to 34 (IVQI…AGII), 49 to 69 (VAPE…IPMA), 89 to 109 (VFAI…GLLA), and 118 to 138 (GYSL…GQAI). Position 140 (R140) interacts with a 1,2-diacyl-sn-glycero-3-phospho-(1'-sn-glycerol). Helical transmembrane passes span 180 to 200 (TFLY…FVFF), 208 to 228 (GSIA…IEGL), and 240 to 260 (TAQL…WWLN).

This sequence belongs to the Lgt family.

Its subcellular location is the cell inner membrane. It catalyses the reaction L-cysteinyl-[prolipoprotein] + a 1,2-diacyl-sn-glycero-3-phospho-(1'-sn-glycerol) = an S-1,2-diacyl-sn-glyceryl-L-cysteinyl-[prolipoprotein] + sn-glycerol 1-phosphate + H(+). The protein operates within protein modification; lipoprotein biosynthesis (diacylglyceryl transfer). Catalyzes the transfer of the diacylglyceryl group from phosphatidylglycerol to the sulfhydryl group of the N-terminal cysteine of a prolipoprotein, the first step in the formation of mature lipoproteins. In Gloeobacter violaceus (strain ATCC 29082 / PCC 7421), this protein is Phosphatidylglycerol--prolipoprotein diacylglyceryl transferase.